The following is a 159-amino-acid chain: Ribosome maturation factor RimP (159 aa).

This sequence belongs to the RimP family.

The protein resides in the cytoplasm. In terms of biological role, required for maturation of 30S ribosomal subunits. The chain is Ribosome maturation factor RimP from Streptococcus pneumoniae serotype 2 (strain D39 / NCTC 7466).